We begin with the raw amino-acid sequence, 163 residues long: CASP-like protein 1C3 (163 aa).

Residues 1-6 (MAKIKK) lie on the Cytoplasmic side of the membrane. Residues 7–27 (IFTNFLRLLALAATVVAIVFM) traverse the membrane as a helical segment. Residues 28-52 (VTSHDSAQVLNLTFTVKYSNTPVFK) lie on the Extracellular side of the membrane. The N-linked (GlcNAc...) asparagine glycan is linked to N38. The chain crosses the membrane as a helical span at residues 53 to 73 (YFVIAEAIAGGYIVISILLSF). The Cytoplasmic portion of the chain corresponds to 74–79 (KSLFWR). The chain crosses the membrane as a helical span at residues 80–100 (LLVILDMVTAVLLTSSISAAL). Over 101-128 (AIAQVGKKGNTHAGWLPVCEQVPDFCDQ) the chain is Extracellular. The helical transmembrane segment at 129 to 149 (VTIALIAGFAAAIIYFVLLLC) threads the bilayer. Over 150 to 163 (SLYVVLSPIFVVTP) the chain is Cytoplasmic.

It belongs to the Casparian strip membrane proteins (CASP) family. Homodimer and heterodimers.

The protein resides in the cell membrane. This Populus trichocarpa (Western balsam poplar) protein is CASP-like protein 1C3.